The primary structure comprises 504 residues: Xylose import ATP-binding protein XylG (504 aa).

2 consecutive ABC transporter domains span residues 5–242 (LEMK…VGRE) and 259–500 (LRVE…VMEA). 37 to 44 (GENGSGKS) is an ATP binding site.

The protein belongs to the ABC transporter superfamily. Xylose importer (TC 3.A.1.2.4) family. In terms of assembly, the complex is composed of two ATP-binding proteins (XylG), two transmembrane proteins (XylH) and a solute-binding protein (XylF).

The protein resides in the cell inner membrane. The enzyme catalyses D-xylose(out) + ATP + H2O = D-xylose(in) + ADP + phosphate + H(+). In terms of biological role, part of the ABC transporter complex XylFGH involved in xylose import. Responsible for energy coupling to the transport system. The polypeptide is Xylose import ATP-binding protein XylG (Histophilus somni (strain 129Pt) (Haemophilus somnus)).